A 107-amino-acid chain; its full sequence is Histone H4 (107 aa).

Positions 1-16 (MPGRGKGGKGGKGYGK) are enriched in gly residues. A disordered region spans residues 1–23 (MPGRGKGGKGGKGYGKVGAKRHA). A DNA-binding region spans residues 17–21 (VGAKR).

It belongs to the histone H4 family. The nucleosome is a histone octamer containing two molecules each of H2A, H2B, H3 and H4 assembled in one H3-H4 heterotetramer and two H2A-H2B heterodimers. The octamer wraps approximately 147 bp of DNA.

The protein resides in the nucleus. The protein localises to the chromosome. Core component of nucleosome. Nucleosomes wrap and compact DNA into chromatin, limiting DNA accessibility to the cellular machineries which require DNA as a template. Histones thereby play a central role in transcription regulation, DNA repair, DNA replication and chromosomal stability. DNA accessibility is regulated via a complex set of post-translational modifications of histones, also called histone code, and nucleosome remodeling. In Euplotes crassus, this protein is Histone H4.